The following is a 519-amino-acid chain: Putative cytochrome P450 CYP13A1 (519 aa).

Residue cysteine 465 participates in heme binding.

Belongs to the cytochrome P450 family. The cofactor is heme.

In terms of biological role, cytochromes P450 are a group of heme-thiolate monooxygenases. They oxidize a variety of structurally unrelated compounds, including steroids, fatty acids, and xenobiotics. The protein is Putative cytochrome P450 CYP13A1 (cyp-13A1) of Caenorhabditis elegans.